The primary structure comprises 412 residues: Serine hydroxymethyltransferase 1 (412 aa).

Residues leucine 116 and 120-122 (GHL) each bind (6S)-5,6,7,8-tetrahydrofolate. Residue lysine 225 is modified to N6-(pyridoxal phosphate)lysine.

Belongs to the SHMT family. Homodimer. It depends on pyridoxal 5'-phosphate as a cofactor.

Its subcellular location is the cytoplasm. It catalyses the reaction (6R)-5,10-methylene-5,6,7,8-tetrahydrofolate + glycine + H2O = (6S)-5,6,7,8-tetrahydrofolate + L-serine. Its pathway is one-carbon metabolism; tetrahydrofolate interconversion. It functions in the pathway amino-acid biosynthesis; glycine biosynthesis; glycine from L-serine: step 1/1. Functionally, catalyzes the reversible interconversion of serine and glycine with tetrahydrofolate (THF) serving as the one-carbon carrier. This reaction serves as the major source of one-carbon groups required for the biosynthesis of purines, thymidylate, methionine, and other important biomolecules. Also exhibits THF-independent aldolase activity toward beta-hydroxyamino acids, producing glycine and aldehydes, via a retro-aldol mechanism. This is Serine hydroxymethyltransferase 1 from Pseudomonas fluorescens (strain Pf0-1).